Consider the following 210-residue polypeptide: Mitochondrial cardiolipin hydrolase (210 aa).

Residues 1–6 (MLLWGR) are Mitochondrial intermembrane-facing. Residues 7-24 (WKVVAGLAGLALSLELLL) form a helical membrane-spanning segment. The Cytoplasmic segment spans residues 25-210 (RYMRRRKPIR…YDFFPEKENK (186 aa)). Residues 138–165 (SSGYMHHKFAVVDGTVVLTGSLNWTVQA) enclose the PLD phosphodiesterase domain. Residues H143, K145, and D150 contribute to the active site.

It belongs to the phospholipase D family. MitoPLD/Zucchini subfamily. As to quaternary structure, homodimer.

The protein localises to the mitochondrion outer membrane. It catalyses the reaction a cardiolipin + H2O = a 1,2-diacyl-sn-glycero-3-phospho-(1'-sn-glycerol) + a 1,2-diacyl-sn-glycero-3-phosphate + H(+). Presents phospholipase and nuclease activities, depending on the different physiological conditions. Plays a key role in mitochondrial fusion and fission via its phospholipase activity. In its phospholipase role, it uses the mitochondrial lipid cardiolipin as substrate to generate phosphatidate (PA or 1,2-diacyl-sn-glycero-3-phosphate), a second messenger signaling lipid. Production of PA facilitates Mitofusin-mediated fusion, whereas the cleavage of PA by the Lipin family of phosphatases produces diacylgycerol (DAG) which promotes mitochondrial fission. Regulates mitochondrial shape through facilitating mitochondrial fusion. During spermatogenesis, plays a critical role in PIWI-interacting RNA (piRNA) biogenesis. piRNAs provide essential protection against the activity of mobile genetic elements. piRNA-mediated transposon silencing is thus critical for maintaining genome stability, in particular in germline cells when transposons are mobilized as a consequence of wide-spread genomic demethylation. Has been shown to be a backbone-non-specific, single strand-specific nuclease, cleaving either RNA or DNA substrates with similar affinity. Produces 5' phosphate and 3' hydroxyl termini, suggesting it could directly participate in the processing of primary piRNA transcripts. Has been proposed to act as a cardiolipin hydrolase to generate phosphatidic acid at mitochondrial surface. Although it cannot be excluded that it can act as a phospholipase in some circumstances, this activity could not be confirmed. The chain is Mitochondrial cardiolipin hydrolase (pld6) from Xenopus tropicalis (Western clawed frog).